The sequence spans 263 residues: TLC domain-containing protein 4 (263 aa).

4 consecutive transmembrane segments (helical) span residues 7-27 (LLISVTCISFFTFQLLFYFVS), 53-73 (VVSTCHSLVVGIFGLYIFLFD), 90-110 (VNIAIASGYLISDLSIIILYW), and 124-144 (ASLYAYYLVLKNGVLAYIGNF). The region spanning 44 to 246 (KKKIEWNSRV…ISKGCIKVIS (203 aa)) is the TLC domain. The residue at position 165 (Lys165) is an N6-acetyllysine. The next 2 membrane-spanning stretches (helical) occupy residues 173–193 (IVINGILMTVVFFIVRIASML) and 211–231 (LGVLIQLSWVISCVVLDVMNV).

Belongs to the TLCD4 family.

Its subcellular location is the membrane. The chain is TLC domain-containing protein 4 from Homo sapiens (Human).